We begin with the raw amino-acid sequence, 335 residues long: Glycerol-3-phosphate dehydrogenase [NAD(P)+] (335 aa).

4 residues coordinate NADPH: Ser15, Tyr16, His36, and Lys110. Positions 110, 139, and 141 each coordinate sn-glycerol 3-phosphate. Ala143 serves as a coordination point for NADPH. Residues Lys195, Asp248, Ser258, Arg259, and Asn260 each contribute to the sn-glycerol 3-phosphate site. The active-site Proton acceptor is the Lys195. An NADPH-binding site is contributed by Arg259. NADPH-binding residues include Val283 and Glu285.

The protein belongs to the NAD-dependent glycerol-3-phosphate dehydrogenase family.

The protein localises to the cytoplasm. It carries out the reaction sn-glycerol 3-phosphate + NAD(+) = dihydroxyacetone phosphate + NADH + H(+). The enzyme catalyses sn-glycerol 3-phosphate + NADP(+) = dihydroxyacetone phosphate + NADPH + H(+). The protein operates within membrane lipid metabolism; glycerophospholipid metabolism. Catalyzes the reduction of the glycolytic intermediate dihydroxyacetone phosphate (DHAP) to sn-glycerol 3-phosphate (G3P), the key precursor for phospholipid synthesis. The chain is Glycerol-3-phosphate dehydrogenase [NAD(P)+] from Mannheimia succiniciproducens (strain KCTC 0769BP / MBEL55E).